We begin with the raw amino-acid sequence, 452 residues long: 51.5 kDa protein (452 aa).

The region spanning 1–126 (MIQSPPGSGK…KDTYDYMIEG (126 aa)) is the Helicase ATP-binding domain. Residues 177–333 (DVVQEYVKHA…NIVQAKQCPD (157 aa)) form the Helicase C-terminal domain. A zinc finger spans residues 331 to 348 (CPDCSAMWPLSQKMCNLC).

Its function is as follows. May play a role in either regulating bacteriophages replication or specifying expression of its own genes. In Lactococcus (lactic streptococci), this protein is 51.5 kDa protein.